Consider the following 151-residue polypeptide: MTIWVDADACPNVIKEILYRAAERMQLPLILVANQALRVPPSRFIRTLRVAAGFDVADNEIVRQCKAGDLVITADIPLAAEVLEKGAAVLNPRGERYSDATIRERLTMRDFMDTLRASGVQTGGPNTLSPRDRQHFAAELDKWWLESQRKK.

It belongs to the UPF0178 family.

In Salmonella enteritidis PT4 (strain P125109), this protein is UPF0178 protein YaiI.